A 482-amino-acid chain; its full sequence is ATP synthase subunit beta (482 aa).

161–168 (GGAGVGKT) provides a ligand contact to ATP.

It belongs to the ATPase alpha/beta chains family. F-type ATPases have 2 components, CF(1) - the catalytic core - and CF(0) - the membrane proton channel. CF(1) has five subunits: alpha(3), beta(3), gamma(1), delta(1), epsilon(1). CF(0) has three main subunits: a(1), b(2) and c(9-12). The alpha and beta chains form an alternating ring which encloses part of the gamma chain. CF(1) is attached to CF(0) by a central stalk formed by the gamma and epsilon chains, while a peripheral stalk is formed by the delta and b chains.

It localises to the cell inner membrane. It catalyses the reaction ATP + H2O + 4 H(+)(in) = ADP + phosphate + 5 H(+)(out). Produces ATP from ADP in the presence of a proton gradient across the membrane. The catalytic sites are hosted primarily by the beta subunits. This is ATP synthase subunit beta from Anaeromyxobacter dehalogenans (strain 2CP-C).